We begin with the raw amino-acid sequence, 307 residues long: MLNGILPLYKPRGMTSFDCVAKIRRLYQTRKVGHSGTLDPNVDGVLPICIGNATKVVQFLVASGKEYQGSITLGFATTTEDLDGEEIARQAVTEPFTSDQVDAALAQMTGAITQIPPMFSAVKVNGRRLYDYARSGETVERPERHITISSFKQRQASTYDSATQTQTIYFTVACSKGTYVRTLAVDVGKVLGVPAVMSDLTRLKSGGFTLDETVTFEEIAAHVDAGTAGALLAPIDKALSQYPRVTLTDEQWQRVKNGAFITAAEGQQTDPDANTMVALVYQNSLKCLYSYRPDEQRYKPFKMFAVN.

Asp39 acts as the Nucleophile in catalysis.

This sequence belongs to the pseudouridine synthase TruB family. Type 1 subfamily.

It catalyses the reaction uridine(55) in tRNA = pseudouridine(55) in tRNA. Responsible for synthesis of pseudouridine from uracil-55 in the psi GC loop of transfer RNAs. The polypeptide is tRNA pseudouridine synthase B (Lactiplantibacillus plantarum (strain ATCC BAA-793 / NCIMB 8826 / WCFS1) (Lactobacillus plantarum)).